We begin with the raw amino-acid sequence, 480 residues long: Glutamate--tRNA ligase 2 (480 aa).

The 'HIGH' region signature appears at 15–25; it reads PSPTGYLHVGG. The 'KMSKS' region motif lies at 248–252; the sequence is RLSKR. Position 251 (Lys251) interacts with ATP.

This sequence belongs to the class-I aminoacyl-tRNA synthetase family. Glutamate--tRNA ligase type 1 subfamily. As to quaternary structure, monomer.

The protein localises to the cytoplasm. It catalyses the reaction tRNA(Glu) + L-glutamate + ATP = L-glutamyl-tRNA(Glu) + AMP + diphosphate. Catalyzes the attachment of glutamate to tRNA(Glu) in a two-step reaction: glutamate is first activated by ATP to form Glu-AMP and then transferred to the acceptor end of tRNA(Glu). In Koribacter versatilis (strain Ellin345), this protein is Glutamate--tRNA ligase 2.